We begin with the raw amino-acid sequence, 320 residues long: Methionyl-tRNA formyltransferase (320 aa).

(6S)-5,6,7,8-tetrahydrofolate is bound at residue 114–117 (SLLP).

Belongs to the Fmt family.

It carries out the reaction L-methionyl-tRNA(fMet) + (6R)-10-formyltetrahydrofolate = N-formyl-L-methionyl-tRNA(fMet) + (6S)-5,6,7,8-tetrahydrofolate + H(+). In terms of biological role, attaches a formyl group to the free amino group of methionyl-tRNA(fMet). The formyl group appears to play a dual role in the initiator identity of N-formylmethionyl-tRNA by promoting its recognition by IF2 and preventing the misappropriation of this tRNA by the elongation apparatus. In Acinetobacter baumannii (strain ACICU), this protein is Methionyl-tRNA formyltransferase.